A 197-amino-acid polypeptide reads, in one-letter code: Probable thymidylate kinase (197 aa).

ATP is bound at residue 7 to 14 (GLDGSGKT).

The protein belongs to the thymidylate kinase family.

The enzyme catalyses dTMP + ATP = dTDP + ADP. The polypeptide is Probable thymidylate kinase (Halorubrum lacusprofundi (strain ATCC 49239 / DSM 5036 / JCM 8891 / ACAM 34)).